Consider the following 578-residue polypeptide: Moesin/ezrin/radixin homolog 1 (578 aa).

One can recognise an FERM domain in the interval 1-296; the sequence is MSPKALNVRV…GNHELYMRRR (296 aa). Residues 463–555 form a disordered region; sequence ASTTPQHHHV…HRENVRQGRD (93 aa). Positions 475 to 484 are enriched in acidic residues; that stretch reads DENENEEELT. Residues 492-555 are compositionally biased toward basic and acidic residues; the sequence is VSRDLDTDEH…HRENVRQGRD (64 aa). Thr-559 bears the Phosphothreonine mark.

Interacts with wgn. Interacts with Mer and arm at the adherens junction. Interacts with cytoskeletal actin at apical buds of microvilli in the precellularised embryo. Interacts with PCID2 (possibly via FERM domain). In terms of processing, phosphorylated on Thr-559. In the oocyte this phosphorylation is induced by phosphatidylinositol 4,5-bisphosphate (PtdIns[4,5]P(2)) generated by sktl.

The protein localises to the cell junction. It localises to the adherens junction. Its subcellular location is the cell projection. The protein resides in the microvillus. It is found in the rhabdomere. The protein localises to the cell membrane. It localises to the cytoplasm. Its subcellular location is the cytoskeleton. The protein resides in the cell cortex. It is found in the cilium. The protein localises to the flagellum. It localises to the nucleus. Its subcellular location is the nucleoplasm. The protein resides in the chromosome. Involved in connections of major cytoskeletal structures to the plasma membrane. Together with wgn, involved in control of axon targeting of R8 and R2-R5 photoreceptors, independent of egr. In the nucleus, recruited to sites of active transcription by RNA polymerase II where it has a role in nuclear mRNA export together with the mRNA export factor PCID2 and other messenger ribonucleoprotein (mRNP) particles. The polypeptide is Moesin/ezrin/radixin homolog 1 (Moe) (Drosophila melanogaster (Fruit fly)).